Reading from the N-terminus, the 329-residue chain is Beta-ketoacyl-[acyl-carrier-protein] synthase III (329 aa).

Residues C113 and H255 contribute to the active site. The tract at residues 256–260 is ACP-binding; that stretch reads QANQR. N285 is an active-site residue.

The protein belongs to the thiolase-like superfamily. FabH family. Homodimer.

The protein localises to the cytoplasm. The catalysed reaction is malonyl-[ACP] + acetyl-CoA + H(+) = 3-oxobutanoyl-[ACP] + CO2 + CoA. It functions in the pathway lipid metabolism; fatty acid biosynthesis. Its function is as follows. Catalyzes the condensation reaction of fatty acid synthesis by the addition to an acyl acceptor of two carbons from malonyl-ACP. Catalyzes the first condensation reaction which initiates fatty acid synthesis and may therefore play a role in governing the total rate of fatty acid production. Possesses both acetoacetyl-ACP synthase and acetyl transacylase activities. Its substrate specificity determines the biosynthesis of branched-chain and/or straight-chain of fatty acids. In Chlorobaculum tepidum (strain ATCC 49652 / DSM 12025 / NBRC 103806 / TLS) (Chlorobium tepidum), this protein is Beta-ketoacyl-[acyl-carrier-protein] synthase III.